A 1031-amino-acid chain; its full sequence is uncharacterized protein (1031 aa).

The SWIM-type zinc-finger motif lies at F50 to N85. The Helicase ATP-binding domain occupies R590 to N751. D603–T610 provides a ligand contact to ATP. The DEAQ box motif lies at D702–Q705. Positions A868–S1022 constitute a Helicase C-terminal domain.

It belongs to the SNF2/RAD54 helicase family.

This is an uncharacterized protein from Mycoplasma genitalium (strain ATCC 33530 / DSM 19775 / NCTC 10195 / G37) (Mycoplasmoides genitalium).